Consider the following 1203-residue polypeptide: Zinc finger and BTB domain-containing protein 38 (1203 aa).

The 68-residue stretch at 33-100 folds into the BTB domain; it reads CDVTIIVEDT…IYSSTVVVRR (68 aa). A Glycyl lysine isopeptide (Lys-Gly) (interchain with G-Cter in SUMO2) cross-link involves residue Lys43. Position 130 is a phosphoserine (Ser130). Glycyl lysine isopeptide (Lys-Gly) (interchain with G-Cter in SUMO2) cross-links involve residues Lys145, Lys148, Lys151, and Lys260. Residues 230–334 form a disordered region; the sequence is EAYRSQPLRE…PSETPGPPAA (105 aa). Residues 269 to 280 are compositionally biased toward polar residues; the sequence is TQTQDSDSTTEN. Residues 299-522 are interaction with CBFA2T3; sequence PAPILSHSEP…RRYQCIFCLE (224 aa). A compositionally biased stretch (basic and acidic residues) spans 313-322; the sequence is GDVHFPREDE. A C2H2-type 1 zinc finger spans residues 341-363; sequence YNCSCCSKSFDSSTLLGAHMQLH. The segment at 370–394 adopts a C2H2-type 2; degenerate zinc-finger fold; it reads FVCKYCNKQFTTLNRLDRHEQICMR. C2H2-type zinc fingers lie at residues 459–481, 487–509, and 515–538; these read YSCV…ANVH, YPCH…EIWH, and YQCI…KSFH. Glycyl lysine isopeptide (Lys-Gly) (interchain with G-Cter in SUMO2) cross-links involve residues Lys549 and Lys556. Composition is skewed to polar residues over residues 581 to 598, 607 to 628, 635 to 644, and 731 to 741; these read RNSS…NESP, LPSS…TSSP, PSWQGTPTSA, and SNHQSPSQPVA. Disordered stretches follow at residues 581–644 and 731–776; these read RNSS…PTSA and SNHQ…VPCN. The segment covering 747-757 has biased composition (basic and acidic residues); sequence KDSKPEADKAS. Residues Lys750, Lys755, Lys796, Lys806, Lys813, Lys834, Lys842, and Lys849 each participate in a glycyl lysine isopeptide (Lys-Gly) (interchain with G-Cter in SUMO2) cross-link. Disordered regions lie at residues 857–882 and 895–914; these read KPKY…SPLG and FDEV…YYNY. Basic and acidic residues predominate over residues 866–877; it reads TLPRESDPETRG. Residues Lys915, Lys971, Lys976, Lys984, Lys988, Lys998, Lys1024, and Lys1033 each participate in a glycyl lysine isopeptide (Lys-Gly) (interchain with G-Cter in SUMO2) cross-link. C2H2-type zinc fingers lie at residues 1017–1039, 1045–1067, 1073–1095, 1101–1123, and 1132–1154; these read YICE…MRCH, YQCK…ERIH, FICQ…ERIH, YHCQ…ERRH, and FACF…QKKH. Residues Lys1116, Lys1139, Lys1142, Lys1157, and Lys1190 each participate in a glycyl lysine isopeptide (Lys-Gly) (interchain with G-Cter in SUMO2) cross-link. Positions 1172-1203 are disordered; that stretch reads NSDLLESQPCTDSEDSDQKDDIKKPLLKMSFE.

In terms of assembly, interacts with CBFA2T3, ZBTB4 and RBBP6. In terms of processing, ubiquitinated by RBBP6; leading to its degradation by the proteasome. In terms of tissue distribution, widely expressed throughout the adult brain where it is found mainly in neurons. Also expressed in the adrenal medulla. Not detected in non-neural tissues including heart, spleen, liver and muscle. In the embryo, expressed in the developing brain and spinal cord but not in the migratory neural crest. Also expressed in the limbs, transiently in somites, and in the embryonic liver. In the embryonic neural tube, expression is restricted to late postmitotic neurons.

It localises to the nucleus. The protein localises to the chromosome. Functionally, transcriptional regulator with bimodal DNA-binding specificity. Binds with a higher affinity to methylated CpG dinucleotides in the consensus sequence 5'-CGCG-3' but can also bind to E-box elements (5'-CACGTG-3'). Can also bind specifically to a single methyl-CpG pair. Represses transcription in a methyl-CpG-dependent manner. Plays an important role in regulating DNA-replication and common fragile sites (CFS) stability in a RBBP6- and MCM10-dependent manner; represses expression of MCM10 which plays an important role in DNA-replication. Acts as a transcriptional activator. May be involved in the differentiation and/or survival of late postmitotic neurons. This is Zinc finger and BTB domain-containing protein 38 from Rattus norvegicus (Rat).